The chain runs to 181 residues: Peptide deformylase (181 aa).

Cys103 and His145 together coordinate Fe cation. Glu146 is an active-site residue. A Fe cation-binding site is contributed by His149.

This sequence belongs to the polypeptide deformylase family. It depends on Fe(2+) as a cofactor.

It catalyses the reaction N-terminal N-formyl-L-methionyl-[peptide] + H2O = N-terminal L-methionyl-[peptide] + formate. Functionally, removes the formyl group from the N-terminal Met of newly synthesized proteins. Requires at least a dipeptide for an efficient rate of reaction. N-terminal L-methionine is a prerequisite for activity but the enzyme has broad specificity at other positions. This is Peptide deformylase from Orientia tsutsugamushi (strain Ikeda) (Rickettsia tsutsugamushi).